A 503-amino-acid chain; its full sequence is Aromatase 1 (503 aa).

C437 contacts heme.

This sequence belongs to the cytochrome P450 family. Requires heme as cofactor.

It localises to the membrane. It carries out the reaction testosterone + 3 reduced [NADPH--hemoprotein reductase] + 3 O2 = 17beta-estradiol + formate + 3 oxidized [NADPH--hemoprotein reductase] + 4 H2O + 4 H(+). The enzyme catalyses androst-4-ene-3,17-dione + 3 reduced [NADPH--hemoprotein reductase] + 3 O2 = estrone + formate + 3 oxidized [NADPH--hemoprotein reductase] + 4 H2O + 4 H(+). In terms of biological role, catalyzes the formation of aromatic C18 estrogens from C19 androgens. This Sus scrofa (Pig) protein is Aromatase 1 (CYP19A1).